A 432-amino-acid chain; its full sequence is 3-phosphoshikimate 1-carboxyvinyltransferase (432 aa).

3-phosphoshikimate is bound by residues Lys22, Ser23, and Arg27. A phosphoenolpyruvate-binding site is contributed by Lys22. Residues Gly96 and Arg127 each contribute to the phosphoenolpyruvate site. 3-phosphoshikimate-binding residues include Ser173, Ser174, Gln175, Ser201, Asp317, Asn340, and Lys344. Gln175 contributes to the phosphoenolpyruvate binding site. Asp317 acts as the Proton acceptor in catalysis. Phosphoenolpyruvate is bound by residues Arg348, Arg392, and Lys417.

This sequence belongs to the EPSP synthase family. Monomer.

The protein localises to the cytoplasm. It carries out the reaction 3-phosphoshikimate + phosphoenolpyruvate = 5-O-(1-carboxyvinyl)-3-phosphoshikimate + phosphate. The protein operates within metabolic intermediate biosynthesis; chorismate biosynthesis; chorismate from D-erythrose 4-phosphate and phosphoenolpyruvate: step 6/7. In terms of biological role, catalyzes the transfer of the enolpyruvyl moiety of phosphoenolpyruvate (PEP) to the 5-hydroxyl of shikimate-3-phosphate (S3P) to produce enolpyruvyl shikimate-3-phosphate and inorganic phosphate. This is 3-phosphoshikimate 1-carboxyvinyltransferase from Mannheimia haemolytica (Pasteurella haemolytica).